A 528-amino-acid polypeptide reads, in one-letter code: T-complex protein 1 subunit gamma (528 aa).

A Phosphoserine modification is found at S250. C364 and C370 are oxidised to a cystine.

It belongs to the TCP-1 chaperonin family. In terms of assembly, heterooligomeric complex of about 850 to 900 kDa that forms two stacked rings, 12 to 16 nm in diameter.

Its subcellular location is the cytoplasm. Its function is as follows. Molecular chaperone; assists the folding of proteins upon ATP hydrolysis. Known to play a role, in vitro, in the folding of actin and tubulin. The polypeptide is T-complex protein 1 subunit gamma (cct3) (Schizosaccharomyces pombe (strain 972 / ATCC 24843) (Fission yeast)).